The primary structure comprises 215 residues: Probable GTP-binding protein EngB (215 aa).

Positions E26–P200 constitute an EngB-type G domain. GTP contacts are provided by residues G34–S41, G61–L65, D79–G82, T146–D149, and F179–S181. Residues S41 and T63 each coordinate Mg(2+).

It belongs to the TRAFAC class TrmE-Era-EngA-EngB-Septin-like GTPase superfamily. EngB GTPase family. Requires Mg(2+) as cofactor.

Its function is as follows. Necessary for normal cell division and for the maintenance of normal septation. The protein is Probable GTP-binding protein EngB of Aliivibrio fischeri (strain ATCC 700601 / ES114) (Vibrio fischeri).